A 199-amino-acid polypeptide reads, in one-letter code: Holliday junction branch migration complex subunit RuvA (199 aa).

Residues 1–62 (MIAYIKGLLA…EDGIQFFGFA (62 aa)) form a domain I region. The domain II stretch occupies residues 63–141 (KEDEKECFLL…GMAAVEHSTL (79 aa)). Positions 142–152 (QQSVITTGSGD) are flexible linker. A domain III region spans residues 152–199 (DEAVEALLALGYSQGEARDAVKKAQKSAPEEDLSALIKIALKELAPSR).

It belongs to the RuvA family. Homotetramer. Forms an RuvA(8)-RuvB(12)-Holliday junction (HJ) complex. HJ DNA is sandwiched between 2 RuvA tetramers; dsDNA enters through RuvA and exits via RuvB. An RuvB hexamer assembles on each DNA strand where it exits the tetramer. Each RuvB hexamer is contacted by two RuvA subunits (via domain III) on 2 adjacent RuvB subunits; this complex drives branch migration. In the full resolvosome a probable DNA-RuvA(4)-RuvB(12)-RuvC(2) complex forms which resolves the HJ.

It localises to the cytoplasm. Its function is as follows. The RuvA-RuvB-RuvC complex processes Holliday junction (HJ) DNA during genetic recombination and DNA repair, while the RuvA-RuvB complex plays an important role in the rescue of blocked DNA replication forks via replication fork reversal (RFR). RuvA specifically binds to HJ cruciform DNA, conferring on it an open structure. The RuvB hexamer acts as an ATP-dependent pump, pulling dsDNA into and through the RuvAB complex. HJ branch migration allows RuvC to scan DNA until it finds its consensus sequence, where it cleaves and resolves the cruciform DNA. The protein is Holliday junction branch migration complex subunit RuvA of Desulforamulus reducens (strain ATCC BAA-1160 / DSM 100696 / MI-1) (Desulfotomaculum reducens).